We begin with the raw amino-acid sequence, 92 residues long: Small ribosomal subunit protein uS19 (92 aa).

Belongs to the universal ribosomal protein uS19 family.

Functionally, protein S19 forms a complex with S13 that binds strongly to the 16S ribosomal RNA. The polypeptide is Small ribosomal subunit protein uS19 (Aliivibrio fischeri (strain ATCC 700601 / ES114) (Vibrio fischeri)).